The chain runs to 505 residues: Maturase K (505 aa).

It belongs to the intron maturase 2 family. MatK subfamily.

The protein localises to the plastid. It is found in the chloroplast. Usually encoded in the trnK tRNA gene intron. Probably assists in splicing its own and other chloroplast group II introns. This is Maturase K from Froelichia floridana (Florida snake-cotton).